The sequence spans 161 residues: Phosphopantetheine adenylyltransferase (161 aa).

Position 9 (S9) interacts with substrate. Residues 9 to 10 and H17 each bind ATP; that span reads SF. Residues K41, L73, and R87 each coordinate substrate. ATP-binding positions include 88–90, E98, and 123–129; these read GIR and TGFISST.

The protein belongs to the bacterial CoaD family. In terms of assembly, homohexamer. Mg(2+) serves as cofactor.

It is found in the cytoplasm. It catalyses the reaction (R)-4'-phosphopantetheine + ATP + H(+) = 3'-dephospho-CoA + diphosphate. It participates in cofactor biosynthesis; coenzyme A biosynthesis; CoA from (R)-pantothenate: step 4/5. Functionally, reversibly transfers an adenylyl group from ATP to 4'-phosphopantetheine, yielding dephospho-CoA (dPCoA) and pyrophosphate. The polypeptide is Phosphopantetheine adenylyltransferase (Psychromonas ingrahamii (strain DSM 17664 / CCUG 51855 / 37)).